A 453-amino-acid polypeptide reads, in one-letter code: Glutamyl-tRNA reductase (453 aa).

Residues 54 to 57 (TCNR), serine 113, 118 to 120 (EAQ), and glutamine 124 contribute to the substrate site. Cysteine 55 serves as the catalytic Nucleophile. 193–198 (GGGEVS) lines the NADP(+) pocket.

It belongs to the glutamyl-tRNA reductase family. As to quaternary structure, homodimer.

It carries out the reaction (S)-4-amino-5-oxopentanoate + tRNA(Glu) + NADP(+) = L-glutamyl-tRNA(Glu) + NADPH + H(+). Its pathway is porphyrin-containing compound metabolism; protoporphyrin-IX biosynthesis; 5-aminolevulinate from L-glutamyl-tRNA(Glu): step 1/2. The protein operates within porphyrin-containing compound metabolism; chlorophyll biosynthesis. Its function is as follows. Catalyzes the NADPH-dependent reduction of glutamyl-tRNA(Glu) to glutamate 1-semialdehyde (GSA). This Chloroflexus aggregans (strain MD-66 / DSM 9485) protein is Glutamyl-tRNA reductase.